Consider the following 101-residue polypeptide: Trp operon repressor homolog (101 aa).

A DNA-binding region spans residues 59-82 (QREIQQNLSTSAATITRGSNMLKM).

The protein belongs to the TrpR family. In terms of assembly, homodimer.

It localises to the cytoplasm. In terms of biological role, this protein is an aporepressor. When complexed with L-tryptophan it binds the operator region of the trp operon and prevents the initiation of transcription. The sequence is that of Trp operon repressor homolog from Actinobacillus succinogenes (strain ATCC 55618 / DSM 22257 / CCUG 43843 / 130Z).